Consider the following 716-residue polypeptide: Antibacterial effector protein Tle3 (716 aa).

A disordered region spans residues 68–87 (PTLPGGQANPGYLTPAGYSL).

Interacts in the cytoplasm with the adapter protein Tla3. Interacts in the periplasm with the immunity protein Tli3.

It localises to the secreted. It is found in the host periplasm. With respect to regulation, neutralized by the immunity protein Tli3 in the periplasm of P.aeruginosa cells. Antibacterial effector. Is toxic once delivered in the periplasm of prey bacteria. In Pseudomonas aeruginosa (strain ATCC 15692 / DSM 22644 / CIP 104116 / JCM 14847 / LMG 12228 / 1C / PRS 101 / PAO1), this protein is Antibacterial effector protein Tle3.